The chain runs to 405 residues: MQYLILSLIFLIPSLGMLTGLSIAATVAFFLLSIIITGFISFIQKQEFNKKFFIKLYPRFGFDDIFCIINKIKTELLFTAWCFISCLFAVHPINSLVTFTKVFVLLFLRFVSNAVTFQNVLYIKNSLILGIITAILLFFIEYSSHGFLTRMFKTHFGLYMLDRGCALLSITTWVAIIILFSNGHNINSFILYIVVLYLLSISDSLASFLGFSIGGIIFILARLIKTIFFKLITISLITGSLLFPVIAKQIDPQNLSEKYLATQPSAAHRLFIWHFVANKIIIRPILGYGFASSKYIETGDNAMIDYRGEKLHPLPLHPHNNILQITLELGILGLALFLCLVYKYLKEIDNIKVSNFRAASYSCFINYYIIGMISYNIWQTWWILSGIWILVLMKLLVKPDIIIDN.

Helical transmembrane passes span 23 to 43 (IAATVAFFLLSIIITGFISFI), 77 to 97 (LFTAWCFISCLFAVHPINSLV), 120 to 140 (VLYIKNSLILGIITAILLFFI), 156 to 178 (FGLYMLDRGCALLSITTWVAIII), 201 to 221 (ISDSLASFLGFSIGGIIFILA), 227 to 247 (IFFKLITISLITGSLLFPVIA), 270 to 290 (LFIWHFVANKIIIRPILGYGF), 322 to 342 (ILQITLELGILGLALFLCLVY), 353 to 375 (VSNFRAASYSCFINYYIIGMISY), and 377 to 397 (IWQTWWILSGIWILVLMKLLV).

The protein belongs to the O-antigen ligase family.

The protein localises to the membrane. The polypeptide is Putative polysaccharide ligase RP358 (Rickettsia prowazekii (strain Madrid E)).